A 235-amino-acid polypeptide reads, in one-letter code: Pyridoxine 5'-phosphate synthase (235 aa).

Asn7 provides a ligand contact to 3-amino-2-oxopropyl phosphate. 9 to 10 (DH) serves as a coordination point for 1-deoxy-D-xylulose 5-phosphate. Residue Arg18 participates in 3-amino-2-oxopropyl phosphate binding. His43 functions as the Proton acceptor in the catalytic mechanism. 2 residues coordinate 1-deoxy-D-xylulose 5-phosphate: Arg45 and His50. Glu70 acts as the Proton acceptor in catalysis. Thr100 is a binding site for 1-deoxy-D-xylulose 5-phosphate. The active-site Proton donor is the His187. Residues Gly188 and 209 to 210 (GH) each bind 3-amino-2-oxopropyl phosphate.

Belongs to the PNP synthase family. Homooctamer; tetramer of dimers.

It is found in the cytoplasm. The catalysed reaction is 3-amino-2-oxopropyl phosphate + 1-deoxy-D-xylulose 5-phosphate = pyridoxine 5'-phosphate + phosphate + 2 H2O + H(+). Its pathway is cofactor biosynthesis; pyridoxine 5'-phosphate biosynthesis; pyridoxine 5'-phosphate from D-erythrose 4-phosphate: step 5/5. In terms of biological role, catalyzes the complicated ring closure reaction between the two acyclic compounds 1-deoxy-D-xylulose-5-phosphate (DXP) and 3-amino-2-oxopropyl phosphate (1-amino-acetone-3-phosphate or AAP) to form pyridoxine 5'-phosphate (PNP) and inorganic phosphate. This Desulfatibacillum aliphaticivorans protein is Pyridoxine 5'-phosphate synthase.